The primary structure comprises 126 residues: Protein mmf2, mitochondrial (126 aa).

Belongs to the RutC family.

It is found in the mitochondrion. The protein localises to the cytoplasm. Plays a role in the maintenance of mitochondrial DNA. This Schizosaccharomyces pombe (strain 972 / ATCC 24843) (Fission yeast) protein is Protein mmf2, mitochondrial (mmf2).